The following is a 142-amino-acid chain: Large-conductance mechanosensitive channel (142 aa).

Helical transmembrane passes span 14–34, 38–58, and 82–102; these read VMDLAVGVIIGAAFTKIVTSV, LVMPIVGAITGGGFDFSNYFL, and GSFITVLINFMILAWIIFLLV.

Belongs to the MscL family. In terms of assembly, homopentamer.

The protein localises to the cell inner membrane. In terms of biological role, channel that opens in response to stretch forces in the membrane lipid bilayer. May participate in the regulation of osmotic pressure changes within the cell. This Sinorhizobium fredii (strain NBRC 101917 / NGR234) protein is Large-conductance mechanosensitive channel.